We begin with the raw amino-acid sequence, 301 residues long: Small ribosomal subunit protein uS2 (301 aa).

This sequence belongs to the universal ribosomal protein uS2 family. Component of the small ribosomal subunit. Mature ribosomes consist of a small (40S) and a large (60S) subunit. The 40S subunit contains about 33 different proteins and 1 molecule of RNA (18S). The 60S subunit contains about 49 different proteins and 3 molecules of RNA (28S, 5.8S and 5S). Interacts with ribosomal protein S21.

It localises to the cytoplasm. In terms of biological role, required for the assembly and/or stability of the 40S ribosomal subunit. Required for the processing of the 20S rRNA-precursor to mature 18S rRNA in a late step of the maturation of 40S ribosomal subunits. The chain is Small ribosomal subunit protein uS2 from Brugia malayi (Filarial nematode worm).